Here is a 175-residue protein sequence, read N- to C-terminus: NADH-ubiquinone oxidoreductase chain 6 (175 aa).

Transmembrane regions (helical) follow at residues 1 to 21, 24 to 44, 46 to 66, 86 to 106, and 149 to 169; these read MMYT…GVSS, SPVY…GIVV, FGGS…MMVV, IVVL…VVYL, and YGCW…FIVI.

This sequence belongs to the complex I subunit 6 family. In terms of assembly, core subunit of respiratory chain NADH dehydrogenase (Complex I) which is composed of 45 different subunits.

It localises to the mitochondrion inner membrane. The catalysed reaction is a ubiquinone + NADH + 5 H(+)(in) = a ubiquinol + NAD(+) + 4 H(+)(out). Functionally, core subunit of the mitochondrial membrane respiratory chain NADH dehydrogenase (Complex I) which catalyzes electron transfer from NADH through the respiratory chain, using ubiquinone as an electron acceptor. Essential for the catalytic activity and assembly of complex I. This Dugong dugon (Dugong) protein is NADH-ubiquinone oxidoreductase chain 6 (MT-ND6).